A 78-amino-acid chain; its full sequence is Large ribosomal subunit protein bL28 (78 aa).

Belongs to the bacterial ribosomal protein bL28 family.

This Legionella pneumophila (strain Paris) protein is Large ribosomal subunit protein bL28.